Here is a 475-residue protein sequence, read N- to C-terminus: Glutamyl-tRNA(Gln) amidotransferase subunit A (475 aa).

Active-site charge relay system residues include K69 and S144. Catalysis depends on S168, which acts as the Acyl-ester intermediate.

Belongs to the amidase family. GatA subfamily. Heterotrimer of A, B and C subunits.

It catalyses the reaction L-glutamyl-tRNA(Gln) + L-glutamine + ATP + H2O = L-glutaminyl-tRNA(Gln) + L-glutamate + ADP + phosphate + H(+). Its function is as follows. Allows the formation of correctly charged Gln-tRNA(Gln) through the transamidation of misacylated Glu-tRNA(Gln) in organisms which lack glutaminyl-tRNA synthetase. The reaction takes place in the presence of glutamine and ATP through an activated gamma-phospho-Glu-tRNA(Gln). This chain is Glutamyl-tRNA(Gln) amidotransferase subunit A, found in Methanococcoides burtonii (strain DSM 6242 / NBRC 107633 / OCM 468 / ACE-M).